A 137-amino-acid polypeptide reads, in one-letter code: 15 kDa protein A (137 aa).

The N-terminal stretch at Met-1–Ala-20 is a signal peptide. 2 cysteine pairs are disulfide-bonded: Cys-77–Cys-88 and Cys-99–Cys-116.

Belongs to the cathelicidin family. As to expression, large granules of neutrophils.

The protein resides in the secreted. Binds to bacterial lipopolysaccharides (LPS), potentiates strongly the early antibacterial effects of BPI. Inhibits the late lethal action of BPI. This Oryctolagus cuniculus (Rabbit) protein is 15 kDa protein A.